Here is a 715-residue protein sequence, read N- to C-terminus: Polyribonucleotide nucleotidyltransferase (715 aa).

Positions 500 and 506 each coordinate Mg(2+). In terms of domain architecture, KH spans 567–634 (PKVKMIRINP…AYIESLVREA (68 aa)). The 76-residue stretch at 637 to 712 (GELYEAKVTR…ERGRVDLSRK (76 aa)) folds into the S1 motif domain.

Belongs to the polyribonucleotide nucleotidyltransferase family. Mg(2+) is required as a cofactor.

It localises to the cytoplasm. It carries out the reaction RNA(n+1) + phosphate = RNA(n) + a ribonucleoside 5'-diphosphate. In terms of biological role, involved in mRNA degradation. Catalyzes the phosphorolysis of single-stranded polyribonucleotides processively in the 3'- to 5'-direction. The chain is Polyribonucleotide nucleotidyltransferase from Acholeplasma laidlawii (strain PG-8A).